Consider the following 542-residue polypeptide: Chaperonin GroEL (542 aa).

ATP-binding positions include 29–32, 86–90, Gly413, 476–478, and Asp492; these read TLGP, DGTTT, and NAA.

Belongs to the chaperonin (HSP60) family. In terms of assembly, forms a cylinder of 14 subunits composed of two heptameric rings stacked back-to-back. Interacts with the co-chaperonin GroES.

The protein resides in the cytoplasm. The enzyme catalyses ATP + H2O + a folded polypeptide = ADP + phosphate + an unfolded polypeptide.. Together with its co-chaperonin GroES, plays an essential role in assisting protein folding. The GroEL-GroES system forms a nano-cage that allows encapsulation of the non-native substrate proteins and provides a physical environment optimized to promote and accelerate protein folding. The chain is Chaperonin GroEL from Lactococcus lactis subsp. cremoris (strain MG1363).